Here is a 60-residue protein sequence, read N- to C-terminus: Protein K12 (60 aa).

The polypeptide is Protein K12 (K12) (Human herpesvirus 8 type P (isolate GK18) (HHV-8)).